The following is a 739-amino-acid chain: Ent-kaurene synthase-like 3 (739 aa).

The Mg(2+) site is built by Asp475, Asp479, Asn619, Thr623, and Glu627. A DDXXD motif motif is present at residues 475–479 (DDFFD).

It belongs to the terpene synthase family. It depends on Mg(2+) as a cofactor. As to expression, expressed in roots and stems.

This Oryza sativa subsp. japonica (Rice) protein is Ent-kaurene synthase-like 3 (KSL3).